The primary structure comprises 234 residues: tRNA (guanine-N(1)-)-methyltransferase (234 aa).

S-adenosyl-L-methionine contacts are provided by residues glycine 110 and 134–139; that span reads IGDYVL.

Belongs to the RNA methyltransferase TrmD family. As to quaternary structure, homodimer.

Its subcellular location is the cytoplasm. It catalyses the reaction guanosine(37) in tRNA + S-adenosyl-L-methionine = N(1)-methylguanosine(37) in tRNA + S-adenosyl-L-homocysteine + H(+). In terms of biological role, specifically methylates guanosine-37 in various tRNAs. The protein is tRNA (guanine-N(1)-)-methyltransferase of Tropheryma whipplei (strain TW08/27) (Whipple's bacillus).